A 264-amino-acid polypeptide reads, in one-letter code: 3-methyl-2-oxobutanoate hydroxymethyltransferase (264 aa).

Positions 45 and 84 each coordinate Mg(2+). Residues 45 to 46, Asp84, and Lys112 each bind 3-methyl-2-oxobutanoate; that span reads DS. A Mg(2+)-binding site is contributed by Glu114. Glu181 functions as the Proton acceptor in the catalytic mechanism.

Belongs to the PanB family. Homodecamer; pentamer of dimers. Requires Mg(2+) as cofactor.

It is found in the cytoplasm. It carries out the reaction 3-methyl-2-oxobutanoate + (6R)-5,10-methylene-5,6,7,8-tetrahydrofolate + H2O = 2-dehydropantoate + (6S)-5,6,7,8-tetrahydrofolate. Its pathway is cofactor biosynthesis; (R)-pantothenate biosynthesis; (R)-pantoate from 3-methyl-2-oxobutanoate: step 1/2. Its function is as follows. Catalyzes the reversible reaction in which hydroxymethyl group from 5,10-methylenetetrahydrofolate is transferred onto alpha-ketoisovalerate to form ketopantoate. This is 3-methyl-2-oxobutanoate hydroxymethyltransferase from Shewanella frigidimarina (strain NCIMB 400).